The following is a 357-amino-acid chain: Probable protein phosphatase 2C 60 (357 aa).

The 307-residue stretch at 23 to 329 (RYGLSSMQGW…DNMTMILVRF (307 aa)) folds into the PPM-type phosphatase domain. Positions 57, 58, 272, and 320 each coordinate Mn(2+). A disordered region spans residues 331–357 (NPTPSETELKPEASQAEGNHDEPSSSN). The span at 348 to 357 (GNHDEPSSSN) shows a compositional bias: basic and acidic residues.

It belongs to the PP2C family. Mg(2+) is required as a cofactor. Requires Mn(2+) as cofactor.

The enzyme catalyses O-phospho-L-seryl-[protein] + H2O = L-seryl-[protein] + phosphate. It carries out the reaction O-phospho-L-threonyl-[protein] + H2O = L-threonyl-[protein] + phosphate. This is Probable protein phosphatase 2C 60 from Arabidopsis thaliana (Mouse-ear cress).